The following is a 755-amino-acid chain: MAESSSPLPPLCERISHKSYFLRAVDLTILGLLLSLLLYRILHVNQKDTVWIVAFLCETCFTFVWLLITNIKWSPADYKTYPERLDERVHELPPVDMFVTTADPVREPPLIVVNTVLSLLAVNYPANKLACYVSDDGCSPLTYFSLKEASKFAKIWVPFCKKYNVRVRAPFMYFRNSPEAAEGSEFSKDWEMTKREYEKLSQKVEDATGSSHWLDAEDDFEAFLNTKSNDHSTIVKVVWENKGGVGDEKEVPHVVYISREKRPNHFHHYKAGAMNFLVRVSGLMTNAPYMLNVDCDMYVNEADVVRQAMCIFLQKSMDSNHCAFVQYPQDFYDSNVGELTVLQLYLGRGIAGIQGPQYAGSGCFHTRRVMYGLSLDDLGDDGSLSSIATRKYLAEESLTREFGNSKEMVKSVVDALQRKPFPQKNLKDSLETAQEMGHCHYEYQTSWGKNIGWLYDSTTEDVNTSIGIHSRGWTSSYIFPDPPAFLGCMPQGGPEVMVQQRRWATGLLEILFNKQSPLIGMFCRKIRFRQSLAYLYVFSWGLRSIPELFYCLLPAYCLLHNSALFPKGVYLGIIITLVGIHCLYTLWEFMNLGFSIQSWYVTQSFGRIKTTCSWLFSVLDVILKLLGISKTVFIVTKKTMPETKSGSGSKKSQREVDCPNQDSGKFEFDGSLYFLPGTFIVLVNLAALAGCLVGLQSRGGGGSGLAEACGCILVVILFLPFLKGMFEKGKYGIPFSTLSKAAFLAALFVVLSVGN.

2 helical membrane passes run 24–44 and 49–69; these read AVDL…ILHV and TVWI…LLIT. Catalysis depends on residues Asp136 and Asp461. A run of 6 helical transmembrane segments spans residues 533–556, 569–589, 615–635, 674–694, 702–722, and 733–753; these read AYLY…LPAY, VYLG…LWEF, LFSV…VFIV, FLPG…CLVG, GSGL…LPFL, and IPFS…VLSV.

It belongs to the glycosyltransferase 2 family. Plant cellulose synthase-like B subfamily.

The protein localises to the golgi apparatus membrane. Its function is as follows. Thought to be a Golgi-localized beta-glycan synthase that polymerize the backbones of noncellulosic polysaccharides (hemicelluloses) of plant cell wall. This Arabidopsis thaliana (Mouse-ear cress) protein is Cellulose synthase-like protein B4 (CSLB4).